The primary structure comprises 676 residues: Symportin 1 (676 aa).

A compositionally biased stretch (basic residues) spans 1-10 (MGKTRRNRVR). Positions 1–28 (MGKTRRNRVRNRTDPIAKPVKPPTDPEL) are disordered. One copy of the ARM 1 repeat lies at 183–216 (TILRLLFRLISADIAPQDIYEEAISCLTTLSEDN). Residues 325–385 (KGNQGSRESP…EDDEDDDDDS (61 aa)) form a disordered region. Acidic residues-rich tracts occupy residues 338 to 354 (ADEEWNGFDDADGDAMD) and 363 to 385 (EDQEEDYEEIDVKEDDEDDDDDS). An ARM 2 repeat occupies 420–453 (TAVPQLIRLSNLPIDSDESLTIQSHALSALNNIS).

It belongs to the nuclear import and ribosome assembly adapter family. In terms of assembly, component of a hexameric 5S RNP precursor complex, composed of 5S RNA, RRS1, RPF2, RPL5, RPL11 and SYO1; this complex acts as a precursor for ribosome assembly.

In terms of biological role, involved in ribosomal large subunit assembly. The chain is Symportin 1 from Chaetomium thermophilum (strain DSM 1495 / CBS 144.50 / IMI 039719) (Thermochaetoides thermophila).